Reading from the N-terminus, the 106-residue chain is Large ribosomal subunit protein uL24 (106 aa).

The protein belongs to the universal ribosomal protein uL24 family. In terms of assembly, part of the 50S ribosomal subunit.

Its function is as follows. One of two assembly initiator proteins, it binds directly to the 5'-end of the 23S rRNA, where it nucleates assembly of the 50S subunit. One of the proteins that surrounds the polypeptide exit tunnel on the outside of the subunit. This Albidiferax ferrireducens (strain ATCC BAA-621 / DSM 15236 / T118) (Rhodoferax ferrireducens) protein is Large ribosomal subunit protein uL24.